An 88-amino-acid chain; its full sequence is Small ribosomal subunit protein uS15 (88 aa).

It belongs to the universal ribosomal protein uS15 family. Part of the 30S ribosomal subunit. Forms a bridge to the 50S subunit in the 70S ribosome, contacting the 23S rRNA.

Functionally, one of the primary rRNA binding proteins, it binds directly to 16S rRNA where it helps nucleate assembly of the platform of the 30S subunit by binding and bridging several RNA helices of the 16S rRNA. In terms of biological role, forms an intersubunit bridge (bridge B4) with the 23S rRNA of the 50S subunit in the ribosome. In Mycoplasma mycoides subsp. mycoides SC (strain CCUG 32753 / NCTC 10114 / PG1), this protein is Small ribosomal subunit protein uS15.